We begin with the raw amino-acid sequence, 160 residues long: Protein max (160 aa).

Over residues 1-13 the composition is skewed to acidic residues; sequence MSDNDDIEVESDE. Residues 1–40 form a disordered region; it reads MSDNDDIEVESDEEQPRFQSAADKRAHHNALERKRRDHIK. At Ser2 the chain carries N-acetylserine. Phosphoserine is present on residues Ser2 and Ser11. The bHLH domain occupies 23–74; that stretch reads DKRAHHNALERKRRDHIKDSFHSLRDSVPSLQGEKASRAQILDKATEYIQYM. Residues 29-40 are compositionally biased toward basic and acidic residues; that stretch reads NALERKRRDHIK. The residue at position 66 (Lys66) is an N6-acetyllysine. Positions 81–102 are leucine-zipper; it reads HQQDIDDLKRQNALLEQQVRAL. The segment at 103-160 is disordered; sequence EKARSSAQLQTNYPSSDNSLYTNAKGSTISAFDGGSDSSSESEPEEPQSRKKLRMEAS. Position 107 is a phosphoserine (Ser107). Residues 107–132 show a composition bias toward polar residues; that stretch reads SSAQLQTNYPSSDNSLYTNAKGSTIS. The Nuclear localization signal motif lies at 152–156; it reads RKKLR. Lys153 and Lys154 each carry N6-acetyllysine.

Belongs to the MAX family. In terms of assembly, efficient DNA binding requires dimerization with another bHLH protein. Binds DNA as a heterodimer with MYC or MAD. Part of the E2F6.com-1 complex in G0 phase composed of E2F6, MGA, MAX, TFDP1, CBX3, BAT8, EUHMTASE1, RING1, RNF2, MBLR, L3MBTL2 and YAF2. Component of some MLL1/MLL complex, at least composed of the core components KMT2A/MLL1, ASH2L, HCFC1/HCF1, WDR5 and RBBP5, as well as the facultative components BACC1, CHD8, E2F6, HSP70, INO80C, KANSL1, LAS1L, MAX, MCRS1, MGA, MYST1/MOF, PELP1, PHF20, PRP31, RING2, RUVB1/TIP49A, RUVB2/TIP49B, SENP3, TAF1, TAF4, TAF6, TAF7, TAF9 and TEX10. Interacts with SPAG9. The heterodimer MYC:MAX interacts with ABI1; the interaction may enhance MYC:MAX transcriptional activity. In terms of processing, reversible lysine acetylation might regulate the nuclear-cytoplasmic shuttling of specific Max complexes. In terms of tissue distribution, high levels found in the brain, heart and lung while lower levels are seen in the liver, kidney and skeletal muscle.

The protein localises to the nucleus. It localises to the cell projection. The protein resides in the dendrite. Functionally, transcription regulator. Forms a sequence-specific DNA-binding protein complex with MYC or MAD which recognizes the core sequence 5'-CAC[GA]TG-3'. The MYC:MAX complex is a transcriptional activator, whereas the MAD:MAX complex is a repressor. May repress transcription via the recruitment of a chromatin remodeling complex containing H3 'Lys-9' histone methyltransferase activity. Represses MYC transcriptional activity from E-box elements. This chain is Protein max, found in Homo sapiens (Human).